Consider the following 732-residue polypeptide: MDAKTDDNSAGKCPVAHGSAGRTNRDWWPNQLNVQILHQQSSLSDPMGEAFDYAEEFKSLDLDAVIKDLHALMTDSQEWWPADFGHYGPLFIRMAWHSAGTYRIADGRGGAGAGQQRFAPLNSWPDNVNLDKARRLLWPIKQKYGRKISWADLLILTGNVALESMGFKTFGFAGGRADVWEPEQDVYWGPEGKWLADERYSGDRDLQNPLGAVQMGLIYVNPEGPNGNPDPLAAARDIRDTFARMAMNDEETVALIAGGHTFGKTHGAGDASLVGVEPEGADIEQQGLGWASKFGTGKGGDAIGSGLEVIWTTTPTKWSNNFFDNLFGFDWELTKSPAGAHQWTPKGGAGAGTVPDAHNSAKRHAPSMLTTDLALRFDPSYATISKRFHENPDQFADAFARAWYKLTHRDMGPVARYLGPLVPKEELPWQDVIPVVDHVLIDEQDAEALKAEILASGLSVSQLVSTAWASASTFRGSDKRGGANGARIRLSPQKDWAVNQPAELAKVLDKLQAIAKDFNAAQTGSKKVSLADLIVLGGNAGIEKAAKAAGHSVDVPFWPGRMDASQEQTDIHSFAPLEPTVDGFRNYVSGKQRLTVEEALVDRAQLLTLTAPELTVLVGGLRVLGANAGQSKHGVFTKQPETLSNDFFVNLLDMGTEWKATSDAKDVFEGRDRKTGEVKWTGTRADLIFGSHSQLRALAEVYATADAKAKFAKDFVVAWTKVMNADRFDIAG.

Residues 1–24 are disordered; the sequence is MDAKTDDNSAGKCPVAHGSAGRTN. A cross-link (tryptophyl-tyrosyl-methioninium (Trp-Tyr) (with M-245)) is located at residues 96 to 219; it reads WHSAGTYRIA…LGAVQMGLIY (124 aa). Histidine 97 acts as the Proton acceptor in catalysis. The tryptophyl-tyrosyl-methioninium (Tyr-Met) (with W-96) cross-link spans 219-245; sequence YVNPEGPNGNPDPLAAARDIRDTFARM. A heme b-binding site is contributed by histidine 260.

It belongs to the peroxidase family. Peroxidase/catalase subfamily. Homodimer or homotetramer. It depends on heme b as a cofactor. In terms of processing, formation of the three residue Trp-Tyr-Met cross-link is important for the catalase, but not the peroxidase activity of the enzyme.

The catalysed reaction is H2O2 + AH2 = A + 2 H2O. It carries out the reaction 2 H2O2 = O2 + 2 H2O. In terms of biological role, bifunctional enzyme with both catalase and broad-spectrum peroxidase activity. The polypeptide is Catalase-peroxidase (Mesorhizobium japonicum (strain LMG 29417 / CECT 9101 / MAFF 303099) (Mesorhizobium loti (strain MAFF 303099))).